A 141-amino-acid chain; its full sequence is Galactose-6-phosphate isomerase subunit LacA 1 (141 aa).

This sequence belongs to the LacAB/RpiB family. As to quaternary structure, heteromultimeric protein consisting of LacA and LacB.

It catalyses the reaction aldehydo-D-galactose 6-phosphate = keto-D-tagatose 6-phosphate. It functions in the pathway carbohydrate metabolism; D-galactose 6-phosphate degradation; D-tagatose 6-phosphate from D-galactose 6-phosphate: step 1/1. In Streptococcus pyogenes serotype M3 (strain SSI-1), this protein is Galactose-6-phosphate isomerase subunit LacA 1.